The primary structure comprises 582 residues: Trans-activating transcriptional regulatory protein (582 aa).

Residues 101–131 (QPVVEQPSPSSAYHAESFEHSAGVNQPSATG) are disordered.

It belongs to the nucleopolyhedrovirus IE-1 protein family. Homodimer. Interacts with helicase and LEF-3. In terms of processing, phosphorylated.

The protein localises to the host nucleus. Functionally, regulatory transcriptional protein, which trans-activates gene expression from early baculovirus promoters. Can also trans-activate its own promoter, suggesting an autoregulation during infection of host cells. Also promotes viral DNA genome replication via the N-terminal region. The chain is Trans-activating transcriptional regulatory protein (IE1) from Autographa californica nuclear polyhedrosis virus (AcMNPV).